A 60-amino-acid chain; its full sequence is Myrmicitoxin(1)-Pr4b (60 aa).

The signal sequence occupies residues 1–23; that stretch reads MKAIIFLFAVLTVVAIIIPIISG. The propeptide occupies 24–33; it reads EPNAGPHAAS. Gln59 is modified (glutamine amide).

Belongs to the formicidae venom clade 2 family. As to expression, expressed by the venom gland.

Its subcellular location is the secreted. Functionally, toxin that causes a rapid and irreversible paralysis when intrathoracically injected into insects (blowflies). Does not cause spontaneous nocifensive behaviors by intraplantar injection in mice. The sequence is that of Myrmicitoxin(1)-Pr4b from Pogonomyrmex rugosus (Desert harvester ant).